A 212-amino-acid polypeptide reads, in one-letter code: N-(5'-phosphoribosyl)anthranilate isomerase (212 aa).

This sequence belongs to the TrpF family.

The enzyme catalyses N-(5-phospho-beta-D-ribosyl)anthranilate = 1-(2-carboxyphenylamino)-1-deoxy-D-ribulose 5-phosphate. It functions in the pathway amino-acid biosynthesis; L-tryptophan biosynthesis; L-tryptophan from chorismate: step 3/5. This is N-(5'-phosphoribosyl)anthranilate isomerase from Microcystis aeruginosa (strain NIES-843 / IAM M-2473).